Reading from the N-terminus, the 252-residue chain is Imidazole glycerol phosphate synthase subunit HisF (252 aa).

Catalysis depends on residues D11 and D130.

Belongs to the HisA/HisF family. Heterodimer of HisH and HisF.

Its subcellular location is the cytoplasm. It carries out the reaction 5-[(5-phospho-1-deoxy-D-ribulos-1-ylimino)methylamino]-1-(5-phospho-beta-D-ribosyl)imidazole-4-carboxamide + L-glutamine = D-erythro-1-(imidazol-4-yl)glycerol 3-phosphate + 5-amino-1-(5-phospho-beta-D-ribosyl)imidazole-4-carboxamide + L-glutamate + H(+). It participates in amino-acid biosynthesis; L-histidine biosynthesis; L-histidine from 5-phospho-alpha-D-ribose 1-diphosphate: step 5/9. Its function is as follows. IGPS catalyzes the conversion of PRFAR and glutamine to IGP, AICAR and glutamate. The HisF subunit catalyzes the cyclization activity that produces IGP and AICAR from PRFAR using the ammonia provided by the HisH subunit. The sequence is that of Imidazole glycerol phosphate synthase subunit HisF from Bacillus cereus (strain AH820).